The sequence spans 370 residues: MSGNFLALAQPGVQQLSPYVPGKPVDELARELDLDPASIVKLASNENPLGASPKALAAIREALDELTRYPDGNGFALKSLLAEQCRVELNQVTLGNGSNDILELVARAYLAPGLNAVFSEHAFAVYPIATQAVGAQAKVVPAKEWGHDLPAMLAAIDANTRVVFIANPNNPTGTWFGAEALDDFLQDVPEHVLVVLDEAYIEYAEGSDLPDGLDFLAAYPNLLVSRTFSKAYGLAALRVGYGLSTPVVADVLNRVRQPFNVNSLALAAACAALKDEEYLAQSRQLNESGMQQLEAGFRELGLSWIPSKGNFICVDLGQVAAPVFQGLLREGVIVRPVANYGMPNHLRVTIGLPAENSRFLEALRKVLARG.

Lys-230 carries the post-translational modification N6-(pyridoxal phosphate)lysine.

This sequence belongs to the class-II pyridoxal-phosphate-dependent aminotransferase family. Histidinol-phosphate aminotransferase subfamily. Homodimer. Requires pyridoxal 5'-phosphate as cofactor.

The catalysed reaction is L-histidinol phosphate + 2-oxoglutarate = 3-(imidazol-4-yl)-2-oxopropyl phosphate + L-glutamate. It functions in the pathway amino-acid biosynthesis; L-histidine biosynthesis; L-histidine from 5-phospho-alpha-D-ribose 1-diphosphate: step 7/9. The chain is Histidinol-phosphate aminotransferase 2 from Pseudomonas fluorescens (strain Pf0-1).